The following is a 127-amino-acid chain: MAKSLRSKWKRKMRAEKRKKNAPKELSRLKSILKIDGDVLMKDVQEIATVVEPKHCQEKTQCVVKDETDDMKMETDIKRNKKTLLDQHGQYPIWMNQRQRKRLKAKRERKKGKSKVKAMKAAKGLTW.

Over residues 1–21 (MAKSLRSKWKRKMRAEKRKKN) the composition is skewed to basic residues. The disordered stretch occupies residues 1–24 (MAKSLRSKWKRKMRAEKRKKNAPK). Glycyl lysine isopeptide (Lys-Gly) (interchain with G-Cter in SUMO2) cross-links involve residues lysine 65 and lysine 72. The segment covering 98–120 (RQRKRLKAKRERKKGKSKVKAMK) has biased composition (basic residues). Residues 98 to 127 (RQRKRLKAKRERKKGKSKVKAMKAAKGLTW) form a disordered region.

Belongs to the learning-associated protein family. Interacts with CTCF, MYO1C and with the transcriptional machinery, including RNA polymerase II and TBP.

The protein localises to the nucleus. Its subcellular location is the nucleolus. It localises to the chromosome. In hippocampal neurons, regulates dendritic and spine growth and synaptic transmission. In Bos taurus (Bovine), this protein is Protein LLP homolog (LLPH).